The chain runs to 269 residues: Monofunctional glycosyltransferase (269 aa).

The chain crosses the membrane as a helical span at residues 46 to 66 (ILLTILIIIALFIGIMYFLST).

Belongs to the glycosyltransferase 51 family.

The protein resides in the cell membrane. It carries out the reaction [GlcNAc-(1-&gt;4)-Mur2Ac(oyl-L-Ala-gamma-D-Glu-L-Lys-D-Ala-D-Ala)](n)-di-trans,octa-cis-undecaprenyl diphosphate + beta-D-GlcNAc-(1-&gt;4)-Mur2Ac(oyl-L-Ala-gamma-D-Glu-L-Lys-D-Ala-D-Ala)-di-trans,octa-cis-undecaprenyl diphosphate = [GlcNAc-(1-&gt;4)-Mur2Ac(oyl-L-Ala-gamma-D-Glu-L-Lys-D-Ala-D-Ala)](n+1)-di-trans,octa-cis-undecaprenyl diphosphate + di-trans,octa-cis-undecaprenyl diphosphate + H(+). It functions in the pathway cell wall biogenesis; peptidoglycan biosynthesis. Peptidoglycan polymerase that catalyzes glycan chain elongation using lipid-linked disaccharide-pentapeptide as the substrate. This chain is Monofunctional glycosyltransferase, found in Staphylococcus aureus (strain Newman).